The chain runs to 329 residues: NAD kinase (329 aa).

The interval Met-1–Gly-26 is disordered. Residue Asp-104 is the Proton acceptor of the active site. NAD(+) is bound by residues Asp-104 to Gly-105, Arg-109, Asn-179 to Glu-180, Asp-209, and Thr-220 to Ser-225.

Belongs to the NAD kinase family. It depends on a divalent metal cation as a cofactor.

The protein localises to the cytoplasm. It carries out the reaction NAD(+) + ATP = ADP + NADP(+) + H(+). Functionally, involved in the regulation of the intracellular balance of NAD and NADP, and is a key enzyme in the biosynthesis of NADP. Catalyzes specifically the phosphorylation on 2'-hydroxyl of the adenosine moiety of NAD to yield NADP. The chain is NAD kinase from Corynebacterium jeikeium (strain K411).